Consider the following 302-residue polypeptide: Snake venom metalloprotease inhibitor 02A10 (302 aa).

The first 23 residues, 1–23 (MSVSRLAASGLLLVSLLALALDG), serve as a signal peptide directing secretion. Positions 24 to 47 (KPVEKWSPWLWPPRPRPPIPPLQQ) are excised as a propeptide. The segment at 32-302 (WLWPPRPRPP…CPKLPPSGGH (271 aa)) is disordered. The span at 33–44 (LWPPRPRPPIPP) shows a compositional bias: pro residues. Gln-48 is subject to Pyrrolidone carboxylic acid. Residues 51–58 (LDPPIPQQ) constitute a propeptide that is removed on maturation. Gln-59 carries the pyrrolidone carboxylic acid modification. A propeptide spanning residues 62 to 69 (LDPPIPQQ) is cleaved from the precursor. Pyrrolidone carboxylic acid is present on Gln-70. The propeptide occupies 73–80 (LDPPIPQQ). Gln-81 carries the post-translational modification Pyrrolidone carboxylic acid. The propeptide occupies 84-91 (LNPPIPQQ). At Gln-92 the chain carries Pyrrolidone carboxylic acid. Residues 95–102 (LDPPIPQQ) constitute a propeptide that is removed on maturation. Position 103 is a pyrrolidone carboxylic acid (Gln-103). Residues 106 to 113 (LNPPIPQQ) constitute a propeptide that is removed on maturation. Position 114 is a pyrrolidone carboxylic acid (Gln-114). A propeptide spanning residues 117 to 124 (LNPPIPQQ) is cleaved from the precursor. Residue Gln-125 is modified to Pyrrolidone carboxylic acid. The propeptide occupies 128 to 135 (LNPPIPQQ). Gln-136 carries the pyrrolidone carboxylic acid modification. The propeptide occupies 139–146 (LNPPIPQQ). Pyrrolidone carboxylic acid is present on Gln-147. The propeptide occupies 150 to 157 (LDPPIPQQ). Gln-158 is subject to Pyrrolidone carboxylic acid. Positions 161 to 168 (LDPPIPQQ) are excised as a propeptide. Position 169 is a pyrrolidone carboxylic acid (Gln-169). Residues 172–179 (LDPPIPQQ) constitute a propeptide that is removed on maturation. Gln-180 is modified (pyrrolidone carboxylic acid). A propeptide spanning residues 183–190 (LNPPIPQQ) is cleaved from the precursor. At Gln-191 the chain carries Pyrrolidone carboxylic acid. Positions 194-201 (LDPPIPQQ) are excised as a propeptide. Gln-202 is subject to Pyrrolidone carboxylic acid. A propeptide spanning residues 205–212 (LDPPIPQQ) is cleaved from the precursor. At Gln-213 the chain carries Pyrrolidone carboxylic acid. Residues 216 to 223 (LNPPIPQQ) constitute a propeptide that is removed on maturation. Gln-224 is subject to Pyrrolidone carboxylic acid. Residues 227–273 (QRPLQPEVPSLMELHQERQKQGRMMHHDEDPGDAAEGPRRQKKEPGK) constitute a propeptide that is removed on maturation. Composition is skewed to basic and acidic residues over residues 240–255 (LHQERQKQGRMMHHDE) and 262–273 (EGPRRQKKEPGK). Cys-279 and Cys-293 form a disulfide bridge. A propeptide spanning residues 294–302 (PKLPPSGGH) is cleaved from the precursor.

The protein in the C-terminal section; belongs to the natriuretic peptide family. Expressed by the venom gland.

It is found in the secreted. In terms of biological role, pEKW peptides may serve as metalloproteinase inhibitors during glandular storage. Their inhibition may be instantly disengaged, by dilution or physiochemical change, when venom is injected into tissue of the victim. Its function is as follows. Exhibits hypotensive and vasodepressor activity. Acts by activating natriuretic receptors (NPR1 and/or NPR2 and/or NPR3). This chain is Snake venom metalloprotease inhibitor 02A10 (Svmpi-Cce12), found in Cerastes cerastes (Horned desert viper).